We begin with the raw amino-acid sequence, 88 residues long: UPF0297 protein BcerKBAB4_4234 (88 aa).

This sequence belongs to the UPF0297 family.

The chain is UPF0297 protein BcerKBAB4_4234 from Bacillus mycoides (strain KBAB4) (Bacillus weihenstephanensis).